The sequence spans 652 residues: uncharacterized protein (652 aa).

A compositionally biased stretch (basic and acidic residues) spans 1–13; that stretch reads MSVTESKAKTERK. The disordered stretch occupies residues 1–21; that stretch reads MSVTESKAKTERKSSRKPAKT.

Belongs to the ParB family.

This is an uncharacterized protein from Escherichia coli (strain K12).